We begin with the raw amino-acid sequence, 573 residues long: 2-succinyl-5-enolpyruvyl-6-hydroxy-3-cyclohexene-1-carboxylate synthase (573 aa).

It belongs to the TPP enzyme family. MenD subfamily. As to quaternary structure, homodimer. Mg(2+) serves as cofactor. The cofactor is Mn(2+). Thiamine diphosphate is required as a cofactor.

It carries out the reaction isochorismate + 2-oxoglutarate + H(+) = 5-enolpyruvoyl-6-hydroxy-2-succinyl-cyclohex-3-ene-1-carboxylate + CO2. Its pathway is quinol/quinone metabolism; 1,4-dihydroxy-2-naphthoate biosynthesis; 1,4-dihydroxy-2-naphthoate from chorismate: step 2/7. It participates in quinol/quinone metabolism; menaquinone biosynthesis. Functionally, catalyzes the thiamine diphosphate-dependent decarboxylation of 2-oxoglutarate and the subsequent addition of the resulting succinic semialdehyde-thiamine pyrophosphate anion to isochorismate to yield 2-succinyl-5-enolpyruvyl-6-hydroxy-3-cyclohexene-1-carboxylate (SEPHCHC). In Shewanella sp. (strain MR-4), this protein is 2-succinyl-5-enolpyruvyl-6-hydroxy-3-cyclohexene-1-carboxylate synthase.